Consider the following 104-residue polypeptide: Putative membrane protein insertion efficiency factor (104 aa).

The segment at 83 to 104 (SSPTPLAESPDDRTVPHTQETS) is disordered.

Belongs to the UPF0161 family.

Its subcellular location is the cell inner membrane. Functionally, could be involved in insertion of integral membrane proteins into the membrane. The sequence is that of Putative membrane protein insertion efficiency factor from Chlamydia trachomatis serovar D (strain ATCC VR-885 / DSM 19411 / UW-3/Cx).